Reading from the N-terminus, the 344-residue chain is tRNA N6-adenosine threonylcarbamoyltransferase (344 aa).

The Fe cation site is built by H110 and H114. Residues 133–137, D166, G179, and N278 each bind substrate; that span reads VVSGA. D303 is a binding site for Fe cation.

The protein belongs to the KAE1 / TsaD family. Fe(2+) is required as a cofactor.

It localises to the cytoplasm. It carries out the reaction L-threonylcarbamoyladenylate + adenosine(37) in tRNA = N(6)-L-threonylcarbamoyladenosine(37) in tRNA + AMP + H(+). In terms of biological role, required for the formation of a threonylcarbamoyl group on adenosine at position 37 (t(6)A37) in tRNAs that read codons beginning with adenine. Is involved in the transfer of the threonylcarbamoyl moiety of threonylcarbamoyl-AMP (TC-AMP) to the N6 group of A37, together with TsaE and TsaB. TsaD likely plays a direct catalytic role in this reaction. This Chlamydia abortus (strain DSM 27085 / S26/3) (Chlamydophila abortus) protein is tRNA N6-adenosine threonylcarbamoyltransferase.